The following is a 387-amino-acid chain: Chaperone protein DnaJ (387 aa).

The J domain occupies 5–70 (DYYEVLGVAK…QKRAAYDRFG (66 aa)). The CR-type zinc-finger motif lies at 140–218 (GKTETIRLPT…CGGAGRVTRE (79 aa)). Residues Cys153, Cys156, Cys170, Cys173, Cys192, Cys195, Cys206, and Cys209 each contribute to the Zn(2+) site. 4 CXXCXGXG motif repeats span residues 153–160 (CEVCAGSG), 170–177 (CPTCGGYG), 192–199 (CPNCQGRG), and 206–213 (CAACGGAG).

It belongs to the DnaJ family. As to quaternary structure, homodimer. Zn(2+) is required as a cofactor.

Its subcellular location is the cytoplasm. Functionally, participates actively in the response to hyperosmotic and heat shock by preventing the aggregation of stress-denatured proteins and by disaggregating proteins, also in an autonomous, DnaK-independent fashion. Unfolded proteins bind initially to DnaJ; upon interaction with the DnaJ-bound protein, DnaK hydrolyzes its bound ATP, resulting in the formation of a stable complex. GrpE releases ADP from DnaK; ATP binding to DnaK triggers the release of the substrate protein, thus completing the reaction cycle. Several rounds of ATP-dependent interactions between DnaJ, DnaK and GrpE are required for fully efficient folding. Also involved, together with DnaK and GrpE, in the DNA replication of plasmids through activation of initiation proteins. This is Chaperone protein DnaJ from Methylobacterium sp. (strain 4-46).